Here is a 241-residue protein sequence, read N- to C-terminus: CRISPR-associated endoribonuclease Cas6 2 (241 aa).

Tyr-28 acts as the Proton acceptor in catalysis. The active-site Proton donor is His-40.

It belongs to the CRISPR-associated protein Cas6/Cse3/CasE family.

Functionally, CRISPR (clustered regularly interspaced short palindromic repeat) is an adaptive immune system that provides protection against mobile genetic elements (viruses, transposable elements and conjugative plasmids). CRISPR clusters contain sequences complementary to antecedent mobile elements and target invading nucleic acids. CRISPR clusters are transcribed and processed into CRISPR RNA (crRNA). This protein processes pre-crRNA into individual crRNA units. This chain is CRISPR-associated endoribonuclease Cas6 2 (cas6b), found in Methanocaldococcus jannaschii (strain ATCC 43067 / DSM 2661 / JAL-1 / JCM 10045 / NBRC 100440) (Methanococcus jannaschii).